A 308-amino-acid polypeptide reads, in one-letter code: Peroxisomal targeting signal 2 receptor (308 aa).

6 WD repeats span residues 57–88 (DVED…RLFD), 101–132 (EHKA…KLWL), 145–176 (GSNS…KFWD), 187–218 (EIPN…YCYD), 231–262 (GHQL…RIFD), and 274–306 (LHSE…YIWN).

The protein belongs to the WD repeat peroxin-7 family. Interacts with PEX21.

Its subcellular location is the cytoplasm. The protein localises to the cytosol. It is found in the peroxisome matrix. Receptor required for the peroxisomal import of proteins containing a C-terminal PTS2-type peroxisomal targeting signal, such as 3-oxoacyl-CoA thiolase. Specifically binds to cargo proteins containing a PTS2 peroxisomal targeting signal in the cytosol. Cargo protein-binding triggers interaction with PEX21 and formation of a ternary complex composed of PEX21 and PEX7 along with PTS2-containing cargo proteins, which is tranlocated into peroxisomes by passing through the PEX13-PEX14 docking complex. The chain is Peroxisomal targeting signal 2 receptor (pex7) from Schizosaccharomyces pombe (strain 972 / ATCC 24843) (Fission yeast).